The sequence spans 105 residues: Large ribosomal subunit protein uL24 (105 aa).

It belongs to the universal ribosomal protein uL24 family. As to quaternary structure, part of the 50S ribosomal subunit.

In terms of biological role, one of two assembly initiator proteins, it binds directly to the 5'-end of the 23S rRNA, where it nucleates assembly of the 50S subunit. One of the proteins that surrounds the polypeptide exit tunnel on the outside of the subunit. This Cellvibrio japonicus (strain Ueda107) (Pseudomonas fluorescens subsp. cellulosa) protein is Large ribosomal subunit protein uL24.